A 356-amino-acid polypeptide reads, in one-letter code: UDP-N-acetylglucosamine--N-acetylmuramyl-(pentapeptide) pyrophosphoryl-undecaprenol N-acetylglucosamine transferase (356 aa).

Residues 15–17 (TGG), asparagine 127, arginine 163, serine 191, isoleucine 244, 263–268 (ALTVSE), and glutamine 288 contribute to the UDP-N-acetyl-alpha-D-glucosamine site.

It belongs to the glycosyltransferase 28 family. MurG subfamily.

The protein localises to the cell inner membrane. The catalysed reaction is di-trans,octa-cis-undecaprenyl diphospho-N-acetyl-alpha-D-muramoyl-L-alanyl-D-glutamyl-meso-2,6-diaminopimeloyl-D-alanyl-D-alanine + UDP-N-acetyl-alpha-D-glucosamine = di-trans,octa-cis-undecaprenyl diphospho-[N-acetyl-alpha-D-glucosaminyl-(1-&gt;4)]-N-acetyl-alpha-D-muramoyl-L-alanyl-D-glutamyl-meso-2,6-diaminopimeloyl-D-alanyl-D-alanine + UDP + H(+). It functions in the pathway cell wall biogenesis; peptidoglycan biosynthesis. Functionally, cell wall formation. Catalyzes the transfer of a GlcNAc subunit on undecaprenyl-pyrophosphoryl-MurNAc-pentapeptide (lipid intermediate I) to form undecaprenyl-pyrophosphoryl-MurNAc-(pentapeptide)GlcNAc (lipid intermediate II). The polypeptide is UDP-N-acetylglucosamine--N-acetylmuramyl-(pentapeptide) pyrophosphoryl-undecaprenol N-acetylglucosamine transferase (Klebsiella pneumoniae subsp. pneumoniae (strain ATCC 700721 / MGH 78578)).